Reading from the N-terminus, the 490-residue chain is Glutamyl-tRNA(Gln) amidotransferase subunit A (490 aa).

Active-site charge relay system residues include K78 and S159. The Acyl-ester intermediate role is filled by S183.

This sequence belongs to the amidase family. GatA subfamily. In terms of assembly, heterotrimer of A, B and C subunits.

It catalyses the reaction L-glutamyl-tRNA(Gln) + L-glutamine + ATP + H2O = L-glutaminyl-tRNA(Gln) + L-glutamate + ADP + phosphate + H(+). Functionally, allows the formation of correctly charged Gln-tRNA(Gln) through the transamidation of misacylated Glu-tRNA(Gln) in organisms which lack glutaminyl-tRNA synthetase. The reaction takes place in the presence of glutamine and ATP through an activated gamma-phospho-Glu-tRNA(Gln). This is Glutamyl-tRNA(Gln) amidotransferase subunit A from Paramagnetospirillum magneticum (strain ATCC 700264 / AMB-1) (Magnetospirillum magneticum).